Reading from the N-terminus, the 522-residue chain is E3 ubiquitin-protein ligase TRIM65 (522 aa).

Position 2 is an N-acetylalanine (A2). An RING-type zinc finger spans residues 13-52; the sequence is CSICLGRYRDPVTLPCGHSFCGNCIQDSWRSCEKSCPECR. A B box-type zinc finger spans residues 92 to 134; it reads SHSARCLRHGRPLEFFCRTEGLCVCSACTVHDCSHHERALLDV. A coiled-coil region spans residues 141-229; the sequence is DQLRARVLVT…QRLTDHLRAL (89 aa). S187 carries the post-translational modification Phosphoserine. One can recognise a B30.2/SPRY domain in the interval 316-509; sequence APVPSAVCPL…LTLCHQPEAT (194 aa).

This sequence belongs to the TRIM/RBCC family. As to quaternary structure, homo-multimerizes. Interacts with ARRDC4.

Its subcellular location is the cytoplasm. The enzyme catalyses S-ubiquitinyl-[E2 ubiquitin-conjugating enzyme]-L-cysteine + [acceptor protein]-L-lysine = [E2 ubiquitin-conjugating enzyme]-L-cysteine + N(6)-ubiquitinyl-[acceptor protein]-L-lysine.. It functions in the pathway protein modification; protein ubiquitination. In terms of biological role, E3 ubiquitin ligase that plays a role in several processes including innate immnity, autophagy or inflammation. Negatively regulates miRNAs by modulating the ubiquitination and stability of TNRC6A, a protein involved in RNA-mediated gene silencing by both micro-RNAs (miRNAs) and short interfering RNAs. This ubiquitination results in the suppressed expression of miR-138-5p leading to increased autophagy. Upon enteroviral infection, promotes 'Lys-63'-mediated ubiquitination activation of IFIH1/MDA5 leading to innate signaling cascade. Mechanistically, selectively recognizes MDA5 filaments that occur on dsRNAs. Also plays a role in limitation of inflammation through different mechanisms. First, promotes 'Lys-48'-mediated ubiquitination of VCAM1 leading to its degradation and limitation of LPS-induced lung inflammation. In addition, negatively regulates inflammasome activation by promoting 'lys48'-linked ubiquitination of NLRP3 which is critical for the inhibition of NLRP3 inflammasome activation in resting macrophages. The chain is E3 ubiquitin-protein ligase TRIM65 (Trim65) from Mus musculus (Mouse).